Here is a 320-residue protein sequence, read N- to C-terminus: tRNA N6-adenosine threonylcarbamoyltransferase (320 aa).

Fe cation contacts are provided by His-114 and His-118. Substrate is bound by residues 136–140 (VVSGG), Asp-169, Gly-182, Asp-186, and Asn-273. Asp-297 contacts Fe cation.

The protein belongs to the KAE1 / TsaD family. Fe(2+) serves as cofactor.

Its subcellular location is the cytoplasm. The catalysed reaction is L-threonylcarbamoyladenylate + adenosine(37) in tRNA = N(6)-L-threonylcarbamoyladenosine(37) in tRNA + AMP + H(+). Required for the formation of a threonylcarbamoyl group on adenosine at position 37 (t(6)A37) in tRNAs that read codons beginning with adenine. Is involved in the transfer of the threonylcarbamoyl moiety of threonylcarbamoyl-AMP (TC-AMP) to the N6 group of A37, together with TsaE and TsaB. TsaD likely plays a direct catalytic role in this reaction. The chain is tRNA N6-adenosine threonylcarbamoyltransferase from Ureaplasma parvum serovar 3 (strain ATCC 27815 / 27 / NCTC 11736).